Reading from the N-terminus, the 138-residue chain is Large ribosomal subunit protein bL19 (138 aa).

This sequence belongs to the bacterial ribosomal protein bL19 family.

Functionally, this protein is located at the 30S-50S ribosomal subunit interface and may play a role in the structure and function of the aminoacyl-tRNA binding site. In Leptospira interrogans serogroup Icterohaemorrhagiae serovar Lai (strain 56601), this protein is Large ribosomal subunit protein bL19.